A 216-amino-acid polypeptide reads, in one-letter code: Ras-related protein Rab-11A (216 aa).

Glycine 2 is subject to N-acetylglycine. GTP is bound by residues serine 20, glycine 21, valine 22, glycine 23, lysine 24, serine 25, asparagine 26, asparagine 37, leucine 38, serine 40, serine 42, and threonine 43. Mg(2+) is bound at residue serine 25. The short motif at 36-47 is the Switch 1 element; that stretch reads FNLESKSTIGVE. 2 residues coordinate Mg(2+): threonine 43 and aspartate 66. The Switch 2 signature appears at 67-86; it reads TAGQERYRAITSAYYRGAVG. Residues glycine 69, asparagine 124, lysine 125, aspartate 127, alanine 155, and leucine 156 each contribute to the GTP site. Positions 183 to 208 are disordered; it reads DRRENDMSPSNNVVPIHVPPTTENKP. Residues cysteine 212 and cysteine 213 are each lipidated (S-geranylgeranyl cysteine). A Cysteine methyl ester modification is found at cysteine 213. The propeptide at 214–216 is removed in mature form; the sequence is QNI.

This sequence belongs to the small GTPase superfamily. Rab family. The cofactor is Mg(2+).

Its subcellular location is the cell membrane. It localises to the endosome membrane. The protein resides in the recycling endosome membrane. The protein localises to the cleavage furrow. It is found in the cytoplasmic vesicle. Its subcellular location is the phagosome. It localises to the cytoplasmic vesicle membrane. The protein resides in the golgi apparatus. The protein localises to the trans-Golgi network. The catalysed reaction is GTP + H2O = GDP + phosphate + H(+). Regulated by guanine nucleotide exchange factors (GEFs) which promote the exchange of bound GDP for free GTP. Regulated by GTPase activating proteins (GAPs) which increase the GTP hydrolysis activity. Inhibited by GDP dissociation inhibitors (GDIs) which prevent Rab-GDP dissociation. Functionally, the small GTPases Rab are key regulators of intracellular membrane trafficking, from the formation of transport vesicles to their fusion with membranes. Rabs cycle between an inactive GDP-bound form and an active GTP-bound form that is able to recruit to membranes different set of downstream effectors directly responsible for vesicle formation, movement, tethering and fusion. The small Rab GTPase RAB11A regulates endocytic recycling. May also be involved in the regulation of preciliary trafficking and neosynthesized protein export. This chain is Ras-related protein Rab-11A (RAB11A), found in Gallus gallus (Chicken).